We begin with the raw amino-acid sequence, 50 residues long: Protein PsbN (50 aa).

Residues 14–34 (IAVTILAILLALTGFGLWSAF) traverse the membrane as a helical segment.

It belongs to the PsbN family.

The protein resides in the cellular thylakoid membrane. In terms of biological role, may play a role in photosystem I and II biogenesis. This chain is Protein PsbN, found in Prochlorococcus marinus (strain MIT 9215).